Consider the following 504-residue polypeptide: One cut domain family member 2 (504 aa).

Disordered regions lie at residues leucine 29–alanine 95, lysine 166–glycine 189, glutamate 274–glutamate 332, and tryptophan 485–alanine 504. Gly residues predominate over residues proline 35–glycine 56. Residues histidine 168 to arginine 186 show a composition bias toward basic residues. The segment at residues valine 324–alanine 410 is a DNA-binding region (CUT). The segment at residues glutamine 426–tryptophan 485 is a DNA-binding region (homeobox). The span at serine 490–alanine 504 shows a compositional bias: low complexity.

This sequence belongs to the CUT homeobox family.

It is found in the nucleus. Functionally, transcriptional activator. Activates the transcription of a number of liver genes such as HNF3B. This is One cut domain family member 2 (ONECUT2) from Homo sapiens (Human).